Reading from the N-terminus, the 754-residue chain is 5-methyltetrahydropteroyltriglutamate--homocysteine methyltransferase (754 aa).

Residues 17–20 (RELK) and lysine 117 each bind 5-methyltetrahydropteroyltri-L-glutamate. L-homocysteine contacts are provided by residues 431–433 (IGS) and glutamate 484. L-methionine contacts are provided by residues 431 to 433 (IGS) and glutamate 484. 5-methyltetrahydropteroyltri-L-glutamate is bound by residues 515-516 (RC) and tryptophan 561. Aspartate 599 is a binding site for L-homocysteine. Aspartate 599 is an L-methionine binding site. Residue glutamate 605 coordinates 5-methyltetrahydropteroyltri-L-glutamate. Histidine 641, cysteine 643, and glutamate 665 together coordinate Zn(2+). Catalysis depends on histidine 694, which acts as the Proton donor. Cysteine 726 contributes to the Zn(2+) binding site.

This sequence belongs to the vitamin-B12 independent methionine synthase family. The cofactor is Zn(2+).

The enzyme catalyses 5-methyltetrahydropteroyltri-L-glutamate + L-homocysteine = tetrahydropteroyltri-L-glutamate + L-methionine. Its pathway is amino-acid biosynthesis; L-methionine biosynthesis via de novo pathway; L-methionine from L-homocysteine (MetE route): step 1/1. In terms of biological role, catalyzes the transfer of a methyl group from 5-methyltetrahydrofolate to homocysteine resulting in methionine formation. This is 5-methyltetrahydropteroyltriglutamate--homocysteine methyltransferase from Pectobacterium atrosepticum (strain SCRI 1043 / ATCC BAA-672) (Erwinia carotovora subsp. atroseptica).